A 528-amino-acid chain; its full sequence is PC4 and SFRS1-interacting protein (528 aa).

Residues 7-64 form the PWWP domain; sequence PGDLIFAKMKGYPHWPARVDEVPDGAVKPPTNKLPIFFFGTHETAFLGPKDIFPYSEN. Residue lysine 75 forms a Glycyl lysine isopeptide (Lys-Gly) (interchain with G-Cter in SUMO2) linkage. A disordered region spans residues 86 to 347; sequence NNPKVKFSSQ…VEKKRETSMD (262 aa). A compositionally biased stretch (polar residues) spans 92–106; that stretch reads FSSQQVSTKQSNASS. 3 positions are modified to phosphoserine: serine 102, serine 105, and serine 106. The span at 113–135 shows a compositional bias: basic and acidic residues; that stretch reads KETSVSKEDTDQEEKASNEDVTK. 2 positions are modified to phosphothreonine: threonine 115 and threonine 122. Phosphoserine is present on serine 129. Threonine 141 is subject to Phosphothreonine. The segment covering 144–153 has biased composition (basic residues); it reads AARRGRKRKA. The short motif at 146–156 is the Nuclear localization signal element; sequence RRGRKRKAEKQ. Serine 176 and serine 205 each carry phosphoserine. Residues 212 to 260 show a composition bias toward basic and acidic residues; the sequence is DEDKSKKKGPEEKPPKKQLKKEEEGQKEEEKPRKEPDKKEGKKEVESKR. Serine 270 carries the post-translational modification Phosphoserine. Position 271 is a phosphothreonine (threonine 271). A phosphoserine mark is found at serine 272 and serine 274. Positions 285 to 300 are enriched in basic residues; that stretch reads KRKGGRHFQAAHRRNM. Positions 303–347 are enriched in basic and acidic residues; the sequence is GQHEKEAADRKRKQEEQMETEQQTKDEGKKPEVKKVEKKRETSMD. Coiled-coil stretches lie at residues 304-332 and 369-393; these read QHEK…EGKK and NRCI…KHTE. The integrase-binding domain (IBD) stretch occupies residues 338–415; that stretch reads VEKKRETSMD…VSQVIMEKST (78 aa). The residue at position 432 (serine 432) is a Phosphoserine. At threonine 435 the chain carries Phosphothreonine. Phosphoserine is present on serine 441. Residues 444–471 show a composition bias toward basic and acidic residues; the sequence is EQRQHEEANKTKDQGKKGPNKKLEKEQT. The disordered stretch occupies residues 444 to 528; the sequence is EQRQHEEANK…VSLKESTLDN (85 aa). A compositionally biased stretch (polar residues) spans 472–492; that stretch reads GTKSLNGGSDAQESNHPQHNG. The span at 496–528 shows a compositional bias: basic and acidic residues; it reads EESKDSREAGSKTKTPGEEREAEVSLKESTLDN. Arginine 515 carries the post-translational modification Citrulline. Phosphoserine is present on serine 520. At threonine 525 the chain carries Phosphothreonine.

It belongs to the HDGF family. As to quaternary structure, monomer. Interacts with IFRD1/PC4. Interacts (via IBD domain) with POGZ (via IBM motif) and CDCA7L (via IBM motifs). Interacts (via IBD domain) with KMT2A (via IBM motifs) with a moderate affinity whereas interacts with the KMT2A-MEN1 complex with a greater affinity; MEN1 enhances interaction of KMT2A with PSIP1. Interacts (via IBD domain) with IWS1 (via IBM motif), MED1 (via IBM motif) and DBF4 (via IBM motifs). Post-translationally, citrullinated by PADI4.

The protein resides in the nucleus. Its function is as follows. Transcriptional coactivator involved in neuroepithelial stem cell differentiation and neurogenesis. Involved in particular in lens epithelial cell gene regulation and stress responses. May play an important role in lens epithelial to fiber cell terminal differentiation. May play a protective role during stress-induced apoptosis. The protein is PC4 and SFRS1-interacting protein (Psip1) of Rattus norvegicus (Rat).